A 211-amino-acid polypeptide reads, in one-letter code: Probable GTP-binding protein EngB (211 aa).

An EngB-type G domain is found at 21-197 (TAPEFAFLGR…WGEIHRVAAE (177 aa)). Residues 29–36 (GRSNVGKS), 55–59 (GRTRA), 80–83 (DLPG), 147–150 (TKAD), and 176–178 (CSA) each bind GTP. Mg(2+)-binding residues include Ser-36 and Thr-57.

The protein belongs to the TRAFAC class TrmE-Era-EngA-EngB-Septin-like GTPase superfamily. EngB GTPase family. Mg(2+) serves as cofactor.

In terms of biological role, necessary for normal cell division and for the maintenance of normal septation. The protein is Probable GTP-binding protein EngB of Acidobacterium capsulatum (strain ATCC 51196 / DSM 11244 / BCRC 80197 / JCM 7670 / NBRC 15755 / NCIMB 13165 / 161).